We begin with the raw amino-acid sequence, 570 residues long: Periplasmic trehalase (570 aa).

The N-terminal stretch at 1-34 (MIPPEIRRSVLLQKAIKLALAGTLLTFASFSATA) is a signal peptide. Substrate-binding positions include Arg159, 166–167 (WD), Asn203, 212–214 (RSQ), 284–286 (RPE), and Gly317. Residues Asp319 and Glu503 each act as proton donor/acceptor in the active site. Glu518 is a binding site for substrate. The interval 544 to 570 (KPCDSVPSTRPASLSATPTKTPSAATQ) is disordered. Over residues 554–570 (PASLSATPTKTPSAATQ) the composition is skewed to low complexity.

The protein belongs to the glycosyl hydrolase 37 family. As to quaternary structure, monomer.

It is found in the periplasm. It catalyses the reaction alpha,alpha-trehalose + H2O = alpha-D-glucose + beta-D-glucose. Provides the cells with the ability to utilize trehalose at high osmolarity by splitting it into glucose molecules that can subsequently be taken up by the phosphotransferase-mediated uptake system. The polypeptide is Periplasmic trehalase (Salmonella schwarzengrund (strain CVM19633)).